The following is a 383-amino-acid chain: Arginine biosynthesis bifunctional protein ArgJ (383 aa).

Thr-146, Lys-168, Thr-179, Glu-259, Asn-378, and Ser-383 together coordinate substrate. Catalysis depends on Thr-179, which acts as the Nucleophile.

Belongs to the ArgJ family. In terms of assembly, heterotetramer of two alpha and two beta chains.

Its subcellular location is the cytoplasm. The catalysed reaction is N(2)-acetyl-L-ornithine + L-glutamate = N-acetyl-L-glutamate + L-ornithine. The enzyme catalyses L-glutamate + acetyl-CoA = N-acetyl-L-glutamate + CoA + H(+). It participates in amino-acid biosynthesis; L-arginine biosynthesis; L-ornithine and N-acetyl-L-glutamate from L-glutamate and N(2)-acetyl-L-ornithine (cyclic): step 1/1. It functions in the pathway amino-acid biosynthesis; L-arginine biosynthesis; N(2)-acetyl-L-ornithine from L-glutamate: step 1/4. Functionally, catalyzes two activities which are involved in the cyclic version of arginine biosynthesis: the synthesis of N-acetylglutamate from glutamate and acetyl-CoA as the acetyl donor, and of ornithine by transacetylation between N(2)-acetylornithine and glutamate. This is Arginine biosynthesis bifunctional protein ArgJ from Streptomyces coelicolor (strain ATCC BAA-471 / A3(2) / M145).